A 649-amino-acid chain; its full sequence is V-type ATP synthase subunit I (649 aa).

A run of 7 helical transmembrane segments spans residues 312–332 (FFSF…GLVF), 360–380 (FMIL…FFGV), 453–473 (FIDN…LSLG), 485–505 (IGWV…LQAV), 520–540 (GLVG…GGVI), 556–576 (VFSD…GAMV), and 593–613 (ILII…GGVI).

Belongs to the V-ATPase 116 kDa subunit family.

The protein localises to the cell membrane. Functionally, produces ATP from ADP in the presence of a proton gradient across the membrane. This chain is V-type ATP synthase subunit I (atpI), found in Chlamydia trachomatis serovar D (strain ATCC VR-885 / DSM 19411 / UW-3/Cx).